Here is a 397-residue protein sequence, read N- to C-terminus: Acetate kinase 1 (397 aa).

Mg(2+) is bound at residue asparagine 8. An ATP-binding site is contributed by lysine 15. Arginine 89 provides a ligand contact to substrate. Aspartate 146 (proton donor/acceptor) is an active-site residue. Residues 206–210 (HLGNG), 281–283 (DFR), and 329–333 (GVGEN) each bind ATP. Glutamate 380 contacts Mg(2+).

The protein belongs to the acetokinase family. Homodimer. It depends on Mg(2+) as a cofactor. Requires Mn(2+) as cofactor.

The protein resides in the cytoplasm. The enzyme catalyses acetate + ATP = acetyl phosphate + ADP. Its pathway is metabolic intermediate biosynthesis; acetyl-CoA biosynthesis; acetyl-CoA from acetate: step 1/2. Catalyzes the formation of acetyl phosphate from acetate and ATP. Can also catalyze the reverse reaction. The protein is Acetate kinase 1 of Listeria monocytogenes serotype 4b (strain F2365).